Consider the following 616-residue polypeptide: Hemagglutinin-neuraminidase (616 aa).

Over 1–26 (MDRAVSQVALENDEREAKNTWRLVFR) the chain is Intravirion. Residues 27–47 (IAILLLTVVTLAISAAALAYS) form a helical membrane-spanning segment. The Virion surface segment spans residues 48–616 (MEASTPSDLV…ELESYAASWP (569 aa)). Residue Asn-119 is glycosylated (N-linked (GlcNAc...) asparagine; by host). The interval 124–152 (GAPIHDPDYIGGIGKELIVDDASDVTSFY) is important for interaction with fusion/F protein. Disulfide bonds link Cys-172–Cys-196, Cys-186–Cys-247, and Cys-238–Cys-251. The interval 234–239 (NRKSCS) is involved in neuraminidase activity. 2 N-linked (GlcNAc...) asparagine; by host glycosylation sites follow: Asn-341 and Asn-433. 2 cysteine pairs are disulfide-bonded: Cys-344–Cys-461 and Cys-455–Cys-465. 3 N-linked (GlcNAc...) asparagine; by host glycosylation sites follow: Asn-481, Asn-538, and Asn-600. Cys-531 and Cys-542 form a disulfide bridge.

This sequence belongs to the paramyxoviruses hemagglutinin-neuraminidase family. As to quaternary structure, homotetramer; composed of disulfide-linked homodimers. Interacts with F protein trimer. Interacts with host CG-1B; this interaction inhibits viral adsorption and replication rather than internalization.

It is found in the virion membrane. The protein localises to the host cell membrane. It carries out the reaction Hydrolysis of alpha-(2-&gt;3)-, alpha-(2-&gt;6)-, alpha-(2-&gt;8)- glycosidic linkages of terminal sialic acid residues in oligosaccharides, glycoproteins, glycolipids, colominic acid and synthetic substrates.. Mediates the viral entry into the host cell together with fusion/F protein. Attaches the virus to sialic acid-containing cell receptors and thereby initiates infection. Binding of HN protein to the receptor induces a conformational change that allows the F protein to trigger virion/cell membranes fusion. Functionally, neuraminidase activity ensures the efficient spread of the virus by dissociating the mature virions from the neuraminic acid containing glycoproteins. The sequence is that of Hemagglutinin-neuraminidase (HN) from Gallus gallus (Chicken).